Here is a 36-residue protein sequence, read N- to C-terminus: Photosystem II reaction center protein M (36 aa).

The chain crosses the membrane as a helical span at residues 5–25 (ILGVIAVALFILIPTSFLLIL).

The protein belongs to the PsbM family. As to quaternary structure, PSII is composed of 1 copy each of membrane proteins PsbA, PsbB, PsbC, PsbD, PsbE, PsbF, PsbH, PsbI, PsbJ, PsbK, PsbL, PsbM, PsbT, PsbY, PsbZ, Psb30/Ycf12, at least 3 peripheral proteins of the oxygen-evolving complex and a large number of cofactors. It forms dimeric complexes.

The protein localises to the plastid. Its subcellular location is the chloroplast thylakoid membrane. Functionally, one of the components of the core complex of photosystem II (PSII). PSII is a light-driven water:plastoquinone oxidoreductase that uses light energy to abstract electrons from H(2)O, generating O(2) and a proton gradient subsequently used for ATP formation. It consists of a core antenna complex that captures photons, and an electron transfer chain that converts photonic excitation into a charge separation. This subunit is found at the monomer-monomer interface. In Bigelowiella natans (Pedinomonas minutissima), this protein is Photosystem II reaction center protein M.